A 223-amino-acid chain; its full sequence is 7-cyano-7-deazaguanine synthase (223 aa).

15–25 (FSGGQDSTTCL) is a binding site for ATP. Residues Cys-191, Cys-200, Cys-203, and Cys-206 each contribute to the Zn(2+) site.

It belongs to the QueC family. Homodimer. The cofactor is Zn(2+).

It catalyses the reaction 7-carboxy-7-deazaguanine + NH4(+) + ATP = 7-cyano-7-deazaguanine + ADP + phosphate + H2O + H(+). The protein operates within purine metabolism; 7-cyano-7-deazaguanine biosynthesis. In terms of biological role, catalyzes the ATP-dependent conversion of 7-carboxy-7-deazaguanine (CDG) to 7-cyano-7-deazaguanine (preQ(0)). This is 7-cyano-7-deazaguanine synthase from Staphylococcus haemolyticus (strain JCSC1435).